Consider the following 396-residue polypeptide: Pyruvate dehydrogenase E1 component subunit alpha type I, mitochondrial (396 aa).

The N-terminal 25 residues, 1–25 (MIFVFANIFKVPTVSPSVMAISVRL), are a transit peptide targeting the mitochondrion. The pyruvate site is built by histidine 88, tyrosine 114, arginine 115, glycine 153, glycine 161, valine 163, aspartate 192, glycine 193, alanine 194, asparagine 221, and tyrosine 223. The thiamine diphosphate site is built by tyrosine 114 and arginine 115. Residues glycine 161, valine 163, aspartate 192, glycine 193, alanine 194, and asparagine 221 each coordinate thiamine diphosphate. Aspartate 192 is a binding site for Mg(2+). Residues asparagine 221 and tyrosine 223 each contribute to the Mg(2+) site. Histidine 288 provides a ligand contact to thiamine diphosphate. Phosphoserine is present on residues serine 289 and serine 296.

In terms of assembly, heterotetramer of two PDHA1 and two PDHB subunits. The heterotetramer interacts with DLAT, and is part of the multimeric pyruvate dehydrogenase complex that contains multiple copies of pyruvate dehydrogenase (E1), dihydrolipoamide acetyltransferase (DLAT, E2) and lipoamide dehydrogenase (DLD, E3). Requires thiamine diphosphate as cofactor. Mg(2+) is required as a cofactor.

Its subcellular location is the mitochondrion matrix. It carries out the reaction N(6)-[(R)-lipoyl]-L-lysyl-[protein] + pyruvate + H(+) = N(6)-[(R)-S(8)-acetyldihydrolipoyl]-L-lysyl-[protein] + CO2. Pyruvate dehydrogenase activity is inhibited by phosphorylation of PDHA1; it is reactivated by dephosphorylation. Functionally, the pyruvate dehydrogenase complex catalyzes the overall conversion of pyruvate to acetyl-CoA and CO(2), and thereby links the glycolytic pathway to the tricarboxylic cycle. The polypeptide is Pyruvate dehydrogenase E1 component subunit alpha type I, mitochondrial (Ascaris suum (Pig roundworm)).